The chain runs to 298 residues: Probable mitochondrial 2-oxodicarboxylate carrier (298 aa).

The next 6 membrane-spanning stretches (helical) occupy residues 6 to 26 (IPFP…VLTL), 62 to 81 (HRLY…KRAL), 105 to 125 (ALSI…VVPF), 159 to 179 (ALYN…AGYF), 203 to 223 (LIAG…FDVI), and 267 to 287 (VLRL…VIEF). 3 Solcar repeats span residues 6-92 (IPFP…YSKL), 102-188 (SSPA…IRNS), and 197-287 (GEIR…VIEF).

It belongs to the mitochondrial carrier (TC 2.A.29) family.

It localises to the mitochondrion inner membrane. Transports C5-C7 oxodicarboxylates across the inner membranes of mitochondria. This chain is Probable mitochondrial 2-oxodicarboxylate carrier, found in Schizosaccharomyces pombe (strain 972 / ATCC 24843) (Fission yeast).